The chain runs to 398 residues: Chalcone synthase 1 (398 aa).

58-65 serves as a coordination point for CoA; that stretch reads KFKRMCDK. Cys167 (acyl-thioester intermediate) is an active-site residue. Substrate contacts are provided by residues Thr200 and 219-220; that span reads GD. Position 311 (Ala311) interacts with CoA.

Belongs to the thiolase-like superfamily. Chalcone/stilbene synthases family. In terms of assembly, homodimer.

The catalysed reaction is (E)-4-coumaroyl-CoA + 3 malonyl-CoA + 3 H(+) = 2',4,4',6'-tetrahydroxychalcone + 3 CO2 + 4 CoA. Its pathway is secondary metabolite biosynthesis; flavonoid biosynthesis. In terms of biological role, the primary product of this enzyme is 4,2',4',6'-tetrahydroxychalcone (also termed naringenin-chalcone or chalcone) which can under specific conditions spontaneously isomerize into naringenin. The protein is Chalcone synthase 1 (CHS1) of Oryza sativa subsp. indica (Rice).